The sequence spans 946 residues: Bifunctional glutamine synthetase adenylyltransferase/adenylyl-removing enzyme (946 aa).

Positions 1–440 are adenylyl removase; it reads MKPLSSPLQQ…VFNELIGDDE (440 aa). The interval 449–946 is adenylyl transferase; the sequence is SEQWRELWQD…ASWQKWLVEE (498 aa).

The protein belongs to the GlnE family. Mg(2+) serves as cofactor.

The enzyme catalyses [glutamine synthetase]-O(4)-(5'-adenylyl)-L-tyrosine + phosphate = [glutamine synthetase]-L-tyrosine + ADP. The catalysed reaction is [glutamine synthetase]-L-tyrosine + ATP = [glutamine synthetase]-O(4)-(5'-adenylyl)-L-tyrosine + diphosphate. Functionally, involved in the regulation of glutamine synthetase GlnA, a key enzyme in the process to assimilate ammonia. When cellular nitrogen levels are high, the C-terminal adenylyl transferase (AT) inactivates GlnA by covalent transfer of an adenylyl group from ATP to specific tyrosine residue of GlnA, thus reducing its activity. Conversely, when nitrogen levels are low, the N-terminal adenylyl removase (AR) activates GlnA by removing the adenylyl group by phosphorolysis, increasing its activity. The regulatory region of GlnE binds the signal transduction protein PII (GlnB) which indicates the nitrogen status of the cell. In Escherichia coli O9:H4 (strain HS), this protein is Bifunctional glutamine synthetase adenylyltransferase/adenylyl-removing enzyme.